A 558-amino-acid polypeptide reads, in one-letter code: uncharacterized protein (558 aa).

The tract at residues 531-558 (NEDDGTSASPTAMTFDMPPEHPFYSHYR) is disordered.

This is an uncharacterized protein from Saccharomyces cerevisiae (strain ATCC 204508 / S288c) (Baker's yeast).